Here is a 467-residue protein sequence, read N- to C-terminus: Probable cysteine protease ATG4 (467 aa).

The segment at 32–93 (GQRYDSRPPL…EDPTQYGNWP (62 aa)) is disordered. Positions 60–81 (ERNEDESWIRTSIDDKERKEAP) are enriched in basic and acidic residues. The active-site Nucleophile is the Cys149. Active-site residues include Asp325 and His327. The segment covering 343-352 (ATSDTPNLTA) has biased composition (polar residues). 2 disordered regions span residues 343 to 390 (ATSD…SDLS) and 429 to 467 (QGVQ…DGLQ). Low complexity predominate over residues 353–379 (STTSVSSTTSSTTIVPPADSIPAPSDP). Over residues 439-454 (VQDKEPPPRGQEREGA) the composition is skewed to basic and acidic residues. The span at 455–467 (IDEVESWDEDGLQ) shows a compositional bias: acidic residues.

The protein belongs to the peptidase C54 family.

It is found in the cytoplasm. The protein resides in the nucleus. The protein localises to the preautophagosomal structure. It carries out the reaction [protein]-C-terminal L-amino acid-glycyl-phosphatidylethanolamide + H2O = [protein]-C-terminal L-amino acid-glycine + a 1,2-diacyl-sn-glycero-3-phosphoethanolamine. In terms of biological role, cysteine protease that plays a key role in cytoplasm to vacuole transport (Cvt) and autophagy by mediating both proteolytic activation and delipidation of ATG8. Required for selective autophagic degradation of the nucleus (nucleophagy) as well as for mitophagy which contributes to regulate mitochondrial quantity and quality by eliminating the mitochondria to a basal level to fulfill cellular energy requirements and preventing excess ROS production. The protease activity is required for proteolytic activation of ATG8: cleaves the C-terminal amino acid of ATG8 to reveal a C-terminal glycine. ATG8 ubiquitin-like activity requires the exposure of the glycine at the C-terminus for its conjugation to phosphatidylethanolamine (PE) and its insertion to membranes, which is necessary for autophagy. The ATG8-PE conjugate mediates tethering between adjacent membranes and stimulates membrane hemifusion, leading to expansion of the autophagosomal membrane during autophagy. In addition to the protease activity, also catalyzes deconjugation of PE-conjugated forms of ATG8 during macroautophagy: ATG8 delipidation is required to release the protein from membranes, which facilitates multiple events during macroautophagy, and especially for efficient autophagosome biogenesis, the assembly of ATG9-containing tubulovesicular clusters into phagophores/autophagosomes, and for the disassembly of PAS-associated ATG components. ATG8 delipidation by ATG4 also recycles ATG8-PE generated on inappropriate membranes to maintain a reservoir of unlipidated ATG8 that is required for autophagosome formation at the PAS. The polypeptide is Probable cysteine protease ATG4 (ATG4) (Phaeosphaeria nodorum (strain SN15 / ATCC MYA-4574 / FGSC 10173) (Glume blotch fungus)).